We begin with the raw amino-acid sequence, 751 residues long: Cyanobacterial phytochrome B (751 aa).

Cys17 contacts a tetrapyrrole. Residues 22 to 511 (IHIPGLIQPH…RSAIIGIVLQ (490 aa)) form a chromophore binding domain region. The GAF domain maps to 152–320 (TTTEISQILA…MTSVEMSAKE (169 aa)). One can recognise a Histidine kinase domain in the interval 536-751 (IASHDLKEPL…STFYFTLQDV (216 aa)). Residue His539 is modified to Phosphohistidine; by autocatalysis.

This sequence in the N-terminal section; belongs to the phytochrome family. Contains one covalently linked tetrapyrrole chromophore.

The enzyme catalyses ATP + protein L-histidine = ADP + protein N-phospho-L-histidine.. Photoreceptor which exists in two forms that are reversibly interconvertible by light: the R form that absorbs maximally in the red region of the spectrum and the FR form that absorbs maximally in the far-red region. The polypeptide is Cyanobacterial phytochrome B (bphB) (Nostoc sp. (strain PCC 7120 / SAG 25.82 / UTEX 2576)).